Consider the following 81-residue polypeptide: MGVHFNICLLLLLVATISSQTLKATEKDDSTDENPFGIYRRGSQCAVYGGRCIPTSVRCPPNTFQCDLSGCSWSERCCCHL.

A signal peptide spans 1–19 (MGVHFNICLLLLLVATISS). The propeptide occupies 20–39 (QTLKATEKDDSTDENPFGIY).

It belongs to the Cnidaria small cysteine-rich protein (SCRiP) family. alpha subfamily. In terms of processing, the basic myotoxic domain of rattlesnake crotamine toxins (with 6 Cys residues) has been detected in this protein. However, this protein contains 2 additional Cys at the C-terminal region. Hence, this protein may contain 4 disulfide bonds instead of the 3 suggested by the myotoxin domain.

Its subcellular location is the secreted. It is found in the nematocyst. Functionally, induces neurotoxic symptoms on zebrafish. Has also been claimed to be implied in calcification, but tests on homolog proteins suggest that proteins of this family have a neurotoxic function and not a calcification function. The polypeptide is Small cysteine-rich protein 1 1 (Montipora capitata (Rice coral)).